A 98-amino-acid polypeptide reads, in one-letter code: NADH-ubiquinone oxidoreductase chain 4L (98 aa).

Transmembrane regions (helical) follow at residues 1 to 21, 26 to 46, and 56 to 76; these read MSPLHFSFYSAFTFSSLGLAF, LISALLCLESMMLSMFIPLSI, and FALVPILMLAFSACEAGTGLA.

It belongs to the complex I subunit 4L family. As to quaternary structure, core subunit of respiratory chain NADH dehydrogenase (Complex I) which is composed of 45 different subunits.

It is found in the mitochondrion inner membrane. The enzyme catalyses a ubiquinone + NADH + 5 H(+)(in) = a ubiquinol + NAD(+) + 4 H(+)(out). Its function is as follows. Core subunit of the mitochondrial membrane respiratory chain NADH dehydrogenase (Complex I) which catalyzes electron transfer from NADH through the respiratory chain, using ubiquinone as an electron acceptor. Part of the enzyme membrane arm which is embedded in the lipid bilayer and involved in proton translocation. The protein is NADH-ubiquinone oxidoreductase chain 4L (MT-ND4L) of Gallus gallus (Chicken).